We begin with the raw amino-acid sequence, 430 residues long: Putative cytochrome P450 139 (430 aa).

Residue Cys372 coordinates heme.

The protein belongs to the cytochrome P450 family. It depends on heme as a cofactor.

The protein is Putative cytochrome P450 139 (cyp139) of Mycobacterium bovis (strain ATCC BAA-935 / AF2122/97).